Reading from the N-terminus, the 226-residue chain is Putative O-methyltransferase Mvan_4497 (226 aa).

Residues V53, E75, 77–78, S83, D101, and V102 contribute to the S-adenosyl-L-methionine site; that span reads GT. D149 is a substrate binding site.

This sequence belongs to the class I-like SAM-binding methyltransferase superfamily. Cation-dependent O-methyltransferase family.

The sequence is that of Putative O-methyltransferase Mvan_4497 from Mycolicibacterium vanbaalenii (strain DSM 7251 / JCM 13017 / BCRC 16820 / KCTC 9966 / NRRL B-24157 / PYR-1) (Mycobacterium vanbaalenii).